Here is a 149-residue protein sequence, read N- to C-terminus: Small ribosomal subunit protein eS19 (149 aa).

The protein belongs to the eukaryotic ribosomal protein eS19 family.

The chain is Small ribosomal subunit protein eS19 (RPS19) from Mya arenaria (Soft-shell clam).